Reading from the N-terminus, the 210-residue chain is Pre-mRNA-splicing factor 38 (210 aa).

Residues Pro-181–Ile-210 form a disordered region. The span at Gln-195–Ile-210 shows a compositional bias: basic and acidic residues.

Belongs to the PRP38 family. Component of the 25S U4/U6.U5 tri-snRNP particle, a subcomplex of the spliceosome.

It is found in the nucleus. Its function is as follows. Required for pre-mRNA splicing and maintenance of stable U6 small nuclear RNA levels. Implicated in the formation of stable and biologically active snRNP structures. As part of the U4/U6.U5 tri-snRNP particle, dispensible for spliceosome assembly, but required for conformational changes, which result in U4 snRNA release and the subsequent catalytic activation of the spliceosome. The sequence is that of Pre-mRNA-splicing factor 38 from Schizosaccharomyces pombe (strain 972 / ATCC 24843) (Fission yeast).